Reading from the N-terminus, the 664-residue chain is Xyloglucan-specific galacturonosyltransferase 1 (664 aa).

The segment covering 1-21 has biased composition (basic residues); the sequence is MSLSKHLQKLVHKRESKKQPN. Residues 1 to 49 form a disordered region; that stretch reads MSLSKHLQKLVHKRESKKQPNKKMPVSVSKLRRPRTSKKTETGNPEKTL. Residues 1-71 are Cytoplasmic-facing; that stretch reads MSLSKHLQKL…IFSARSFLYR (71 aa). Residues 72-92 form a helical; Signal-anchor for type II membrane protein membrane-spanning segment; sequence VPLTILFLFLIYLWSTSTTVI. Over 93-664 the chain is Lumenal; it reads SGNVVHICIS…SLFKKIAKTV (572 aa). Asn-126, Asn-158, Asn-175, Asn-181, Asn-355, Asn-379, and Asn-522 each carry an N-linked (GlcNAc...) asparagine glycan.

This sequence belongs to the glycosyltransferase 47 family. In terms of tissue distribution, root hair specific. Expressed in roots and young leaves.

The protein localises to the golgi apparatus membrane. Functionally, xyloglucan-specific galacturonosyltransferase that forms the beta-D-galactosyluronic acid-(1-&gt;2)-alpha-D-xylosyl linkage. Required for root hair development probably by providing important acidic xyloglucans. This Arabidopsis thaliana (Mouse-ear cress) protein is Xyloglucan-specific galacturonosyltransferase 1.